A 310-amino-acid chain; its full sequence is tRNA-cytidine(32) 2-sulfurtransferase (310 aa).

A PP-loop motif motif is present at residues 45-50 (SGGKDS). Cys-120, Cys-123, and Cys-211 together coordinate [4Fe-4S] cluster.

Belongs to the TtcA family. In terms of assembly, homodimer. Mg(2+) serves as cofactor. The cofactor is [4Fe-4S] cluster.

It is found in the cytoplasm. It catalyses the reaction cytidine(32) in tRNA + S-sulfanyl-L-cysteinyl-[cysteine desulfurase] + AH2 + ATP = 2-thiocytidine(32) in tRNA + L-cysteinyl-[cysteine desulfurase] + A + AMP + diphosphate + H(+). The protein operates within tRNA modification. Its function is as follows. Catalyzes the ATP-dependent 2-thiolation of cytidine in position 32 of tRNA, to form 2-thiocytidine (s(2)C32). The sulfur atoms are provided by the cysteine/cysteine desulfurase (IscS) system. The sequence is that of tRNA-cytidine(32) 2-sulfurtransferase from Shewanella baltica (strain OS185).